A 296-amino-acid polypeptide reads, in one-letter code: N-acetylmuramic acid 6-phosphate etherase (296 aa).

Residues 54 to 217 form the SIS domain; the sequence is VIASFQQGGR…STTAMVGIGK (164 aa). Catalysis depends on Glu82, which acts as the Proton donor. Glu113 is an active-site residue.

This sequence belongs to the GCKR-like family. MurNAc-6-P etherase subfamily. In terms of assembly, homodimer.

It catalyses the reaction N-acetyl-D-muramate 6-phosphate + H2O = N-acetyl-D-glucosamine 6-phosphate + (R)-lactate. The protein operates within amino-sugar metabolism; N-acetylmuramate degradation. In terms of biological role, specifically catalyzes the cleavage of the D-lactyl ether substituent of MurNAc 6-phosphate, producing GlcNAc 6-phosphate and D-lactate. The chain is N-acetylmuramic acid 6-phosphate etherase from Shouchella clausii (strain KSM-K16) (Alkalihalobacillus clausii).